Consider the following 124-residue polypeptide: Urease subunit beta (124 aa).

It belongs to the urease beta subunit family. Heterotrimer of UreA (gamma), UreB (beta) and UreC (alpha) subunits. Three heterotrimers associate to form the active enzyme.

It is found in the cytoplasm. It carries out the reaction urea + 2 H2O + H(+) = hydrogencarbonate + 2 NH4(+). It participates in nitrogen metabolism; urea degradation; CO(2) and NH(3) from urea (urease route): step 1/1. This Bacillus subtilis (strain 168) protein is Urease subunit beta.